The primary structure comprises 737 residues: Prospero homeobox protein 1 (737 aa).

An interaction with RORG region spans residues 1–28 (MPDHDSTALLSRQTKRRRVDIGVKRTVG). Residues 103–135 (KNGGTEPSFQASGLSSTGSEVHQEDICSNSSRD) show a composition bias toward polar residues. The interval 103–149 (KNGGTEPSFQASGLSSTGSEVHQEDICSNSSRDSPPECLSPFGRPTM) is disordered. Phosphoserine occurs at positions 177, 179, and 199. The tract at residues 178–242 (HSPSVALRGN…REERRQLKQQ (65 aa)) is disordered. Low complexity predominate over residues 213–223 (LPQQQQQSFQQ). Basic and acidic residues predominate over residues 227-242 (ARKEQKREERRQLKQQ). 2 positions are modified to phosphoserine: Ser-291 and Ser-295. The span at 320–337 (MAENKPKREGNNKERDHG) shows a compositional bias: basic and acidic residues. Disordered regions lie at residues 320 to 344 (MAEN…LQPE) and 445 to 476 (KNSS…TGFT). Lys-324 is covalently cross-linked (Glycyl lysine isopeptide (Lys-Gly) (interchain with G-Cter in SUMO2)). Positions 464–476 (LHQSPLSATTGFT) are enriched in polar residues. Phosphoserine occurs at positions 511, 514, and 557. The Prospero-type homeo domain maps to 577–635 (QEGLSPNHLKKAKLMFFYTRYPSSNMLKTYFSDVKFNRCITSQLIKWFSNFREFYYIQM). Residues 577-735 (QEGLSPNHLK…KSPNCLQELL (159 aa)) are homeo-Prospero. The 100-residue stretch at 636 to 735 (EKYARQAIND…KSPNCLQELL (100 aa)) folds into the Prospero domain. Positions 723-729 (EIFKSPN) are essential for nuclear localization, interaction with RORG, repression of RORG transcriptional activator activity.

The protein belongs to the Prospero homeodomain family. As to quaternary structure, interacts with RORA and RORG (via AF-2 motif). In terms of tissue distribution, most actively expressed in the developing lens. Detected also in embryonic brain, lung, liver and kidney. In adult, it is more abundant in heart and liver than in brain, skeletal muscle, kidney and pancreas.

It localises to the nucleus. Its function is as follows. Transcription factor involved in developmental processes such as cell fate determination, gene transcriptional regulation and progenitor cell regulation in a number of organs. Plays a critical role in embryonic development and functions as a key regulatory protein in neurogenesis and the development of the heart, eye lens, liver, pancreas and the lymphatic system. Involved in the regulation of the circadian rhythm. Represses: transcription of the retinoid-related orphan receptor RORG, transcriptional activator activity of RORA and RORG and the expression of RORA/G-target genes including core clock components: BMAL1, NPAS2 and CRY1 and metabolic genes: AVPR1A and ELOVL3. The protein is Prospero homeobox protein 1 (PROX1) of Homo sapiens (Human).